A 73-amino-acid chain; its full sequence is Large ribosomal subunit protein eL20 (73 aa).

Belongs to the eukaryotic ribosomal protein eL20 family. In terms of assembly, part of the 50S ribosomal subunit. Binds 23S rRNA.

This Methanococcus aeolicus (strain ATCC BAA-1280 / DSM 17508 / OCM 812 / Nankai-3) protein is Large ribosomal subunit protein eL20.